The chain runs to 88 residues: Actobindin (88 aa).

Met1 bears the N-acetylmethionine mark. The tract at residues 1-22 is disordered; the sequence is MNPELQSAIGQGAALKHAETVD. Lys35 bears the N6,N6,N6-trimethyllysine mark. Positions 37-54 constitute a WH2 domain; that stretch reads DRSSFLEEVAKPHELKHA. Lys72 carries the post-translational modification N6,N6,N6-trimethyllysine.

Monomer.

In terms of biological role, is able to bind two actin monomers at high concentrations of G-actin. The protein is Actobindin of Acanthamoeba castellanii (Amoeba).